Here is a 189-residue protein sequence, read N- to C-terminus: MTSPSIESGARERTRRAILDAAMLVLADHPTAALGDIAAAAGVGRSTVHRYYPERTDLLRALARHVHDLSNAAIERADPTSGPVDAALRRVVESQLDLGPIVLFVYYEPSILADPELAAYFDIGDEAIVEVLNRASTERPEYPPGWARRVFWALMQAGYEAAKDGMPRHQIVDAIMTSLTSGIITLPRT.

The region spanning 12-70 (ERTRRAILDAAMLVLADHPTAALGDIAAAAGVGRSTVHRYYPERTDLLRALARHVHDLS) is the HTH tetR-type domain. The H-T-H motif DNA-binding region spans 33 to 52 (ALGDIAAAAGVGRSTVHRYY). The tract at residues 70 to 71 (SN) is proflavine binding.

In terms of assembly, homodimer. Forms a structurally asymmetric homodimer exhibiting local unfolding and a blocked drug-binding site.

Its activity is regulated as follows. Repressor activity is regulated by binding of different substrates of the LfrA multidrug efflux pump, such as acriflavine, proflavine, ethidium bromide and rhodamine 123. Binding of these ligands causes the dissociation of LfrR from the promoter, inducing lfrA expression. Represses the transcription of the lfrRA operon by binding directly to the promoter region of lfrR-lfrA. Binds specifically to a 143-bp region upstream of the lfrR gene. In Mycolicibacterium smegmatis (strain ATCC 700084 / mc(2)155) (Mycobacterium smegmatis), this protein is HTH-type transcriptional repressor LfrR.